The chain runs to 317 residues: NADH kinase (317 aa).

It belongs to the NAD kinase family. Homodimer. Ubiquitous.

The protein localises to the cytoplasm. It carries out the reaction NADH + ATP = ADP + NADPH + H(+). Two-fold decrease in activity in the presence of PPi, iodoacetate or para-chloromercuribenzoate. Its function is as follows. Phosphorylates specifically NADH. Can phosphorylate NAD with a 100-fold decrease in efficiency compared to NADH. Prefers ATP as nucleoside triphosphate substrate. Can also utilize UTP, GTP and CTP. Key source of the cellular reductant NADPH which is an important antioxidant factor. In Arabidopsis thaliana (Mouse-ear cress), this protein is NADH kinase (NADK3).